The following is a 254-amino-acid chain: Triosephosphate isomerase (254 aa).

Residue 9-11 participates in substrate binding; sequence NWK. His95 acts as the Electrophile in catalysis. Glu167 acts as the Proton acceptor in catalysis. Residues Gly173, Ser213, and 234 to 235 contribute to the substrate site; that span reads GG.

The protein belongs to the triosephosphate isomerase family. In terms of assembly, homodimer.

It is found in the cytoplasm. It catalyses the reaction D-glyceraldehyde 3-phosphate = dihydroxyacetone phosphate. It participates in carbohydrate biosynthesis; gluconeogenesis. It functions in the pathway carbohydrate degradation; glycolysis; D-glyceraldehyde 3-phosphate from glycerone phosphate: step 1/1. Functionally, involved in the gluconeogenesis. Catalyzes stereospecifically the conversion of dihydroxyacetone phosphate (DHAP) to D-glyceraldehyde-3-phosphate (G3P). The sequence is that of Triosephosphate isomerase from Roseiflexus sp. (strain RS-1).